The chain runs to 343 residues: Fructose-1,6-bisphosphatase class 1 (343 aa).

4 residues coordinate Mg(2+): Glu90, Asp109, Leu111, and Asp112. Substrate-binding positions include 112–115 (DGSS) and Asn199. Glu271 contributes to the Mg(2+) binding site.

This sequence belongs to the FBPase class 1 family. As to quaternary structure, homotetramer. The cofactor is Mg(2+).

The protein resides in the cytoplasm. The catalysed reaction is beta-D-fructose 1,6-bisphosphate + H2O = beta-D-fructose 6-phosphate + phosphate. It functions in the pathway carbohydrate biosynthesis; Calvin cycle. The chain is Fructose-1,6-bisphosphatase class 1 from Rhodopseudomonas palustris (strain HaA2).